The sequence spans 509 residues: Cytochrome P450 4A10 (509 aa).

2 helical membrane passes run 15–35 (LSGFLQVASVLGLLLLLVKAV) and 121–141 (LLAPWIGYGLLLLNGQPWFQH). Glutamate 320 provides a ligand contact to heme. A Phosphoserine modification is found at serine 439. Cysteine 456 contacts heme.

The protein belongs to the cytochrome P450 family. Heme is required as a cofactor. As to expression, highly expressed in the kidneys of both genders.

The protein localises to the endoplasmic reticulum membrane. It localises to the microsome membrane. It carries out the reaction an omega-methyl-long-chain fatty acid + reduced [NADPH--hemoprotein reductase] + O2 = an omega-hydroxy-long-chain fatty acid + oxidized [NADPH--hemoprotein reductase] + H2O + H(+). It catalyses the reaction dodecanoate + reduced [NADPH--hemoprotein reductase] + O2 = 12-hydroxydodecanoate + oxidized [NADPH--hemoprotein reductase] + H2O + H(+). The catalysed reaction is dodecanoate + reduced [NADPH--hemoprotein reductase] + O2 = 11-hydroxydodecanoate + oxidized [NADPH--hemoprotein reductase] + H2O + H(+). The enzyme catalyses tetradecanoate + reduced [NADPH--hemoprotein reductase] + O2 = 14-hydroxytetradecanoate + oxidized [NADPH--hemoprotein reductase] + H2O + H(+). It carries out the reaction hexadecanoate + reduced [NADPH--hemoprotein reductase] + O2 = 16-hydroxyhexadecanoate + oxidized [NADPH--hemoprotein reductase] + H2O + H(+). It catalyses the reaction (9Z)-octadecenoate + reduced [NADPH--hemoprotein reductase] + O2 = 18-hydroxy-(9Z)-octadecenoate + oxidized [NADPH--hemoprotein reductase] + H2O + H(+). The catalysed reaction is (9Z,12Z)-octadecadienoate + reduced [NADPH--hemoprotein reductase] + O2 = 18-hydroxy-(9Z,12Z)-octadecadienoate + oxidized [NADPH--hemoprotein reductase] + H2O + H(+). The enzyme catalyses (9Z,12Z)-octadecadienoate + reduced [NADPH--hemoprotein reductase] + O2 = 17-hydroxy-(9Z,12Z)-octadecadienoate + oxidized [NADPH--hemoprotein reductase] + H2O + H(+). It carries out the reaction (5Z,8Z,11Z,14Z)-eicosatetraenoate + reduced [NADPH--hemoprotein reductase] + O2 = 20-hydroxy-(5Z,8Z,11Z,14Z)-eicosatetraenoate + oxidized [NADPH--hemoprotein reductase] + H2O + H(+). It catalyses the reaction 8,9-epoxy-(5Z,11Z,14Z)-eicosatrienoate + reduced [NADPH--hemoprotein reductase] + O2 = 20-hydroxy-8,9-epoxy-(5Z,11Z,14Z)-eicosatrienoate + oxidized [NADPH--hemoprotein reductase] + H2O + H(+). In terms of biological role, a cytochrome P450 monooxygenase involved in the metabolism of fatty acids. Catalyzes predominantly the oxidation of the terminal carbon (omega-oxidation) of long-chain fatty acids. Acts as a major omega-hydroxylase for dodecanoic (lauric) acid in liver. In kidney, may play an important role in omega-hydroxylation of (5Z,8Z,11Z,14Z)-eicosatetraenoic acid (arachidonate) to 20-hydroxyeicosatetraenoic acid (20-HETE), a signaling molecule acting both as vasoconstrictive and natriuretic with overall effect on arterial blood pressure. Also participates in the formation of anti-inflammatory hydroxyepoxyeicosatrienoic acids (HEETs) in kidney by converting 8,9-epoxyeicosatrienoic acid (EET) to 20,8,9-HEET, an activator of PPARA. Displays substantially lower fatty acid omega-1 hydroxylase activity. Mechanistically, uses molecular oxygen inserting one oxygen atom into a substrate, and reducing the second into a water molecule, with two electrons provided by NADPH via cytochrome P450 reductase (CPR; NADPH-ferrihemoprotein reductase). The chain is Cytochrome P450 4A10 from Mus musculus (Mouse).